The sequence spans 580 residues: Ran GTPase-activating protein 1 (580 aa).

LRR repeat units lie at residues 48-71 (YEGL…AIAE), 111-134 (GAQL…GFEA), 141-168 (CFTL…ALTE), 207-230 (IGTL…ALAE), 235-258 (NSLL…AMAE), 292-315 (LHKL…SLAE), and 320-343 (KSDL…QVQE). The disordered stretch occupies residues 356-429 (SLSDDEDEDD…PPKLPVDAST (74 aa)). The segment covering 358-399 (SDDEDEDDDDDDEDDDDDEDDENDDEEVEEEEEEVEEEEGGD) has biased composition (acidic residues).

This sequence belongs to the RNA1 family. As to quaternary structure, homodimer. Identified in a complex with RANBP2 and the ubiquitin-conjugating enzyme E2 (UBE2I). Post-translationally, may be sumoylated.

It is found in the cytoplasm. The protein resides in the nucleus. The protein localises to the nucleoplasm. It localises to the nucleus envelope. Its subcellular location is the chromosome. It is found in the centromere. The protein resides in the kinetochore. The protein localises to the cytoskeleton. It localises to the spindle. Its function is as follows. GTPase activator for RAN, converting it to the GDP-bound state. Converts cytoplasmic GTP-bound RAN to GDP-bound RAN, which is required for RAN-mediated nuclear import and export. In Xenopus laevis (African clawed frog), this protein is Ran GTPase-activating protein 1 (rangap1).